Here is a 206-residue protein sequence, read N- to C-terminus: Proteasome subunit beta type-2 (206 aa).

It belongs to the peptidase T1B family. As to quaternary structure, the 26S proteasome consists of a 20S proteasome core and two 19S regulatory subunits. The 20S proteasome core is composed of 28 subunits that are arranged in four stacked rings, resulting in a barrel-shaped structure. The two end rings are each formed by seven alpha subunits, and the two central rings are each formed by seven beta subunits. The catalytic chamber with the active sites is on the inside of the barrel.

The protein resides in the cytoplasm. The protein localises to the nucleus. In terms of biological role, non-catalytic component of the proteasome, a multicatalytic proteinase complex which is characterized by its ability to cleave peptides with Arg, Phe, Tyr, Leu, and Glu adjacent to the leaving group at neutral or slightly basic pH. The proteasome has an ATP-dependent proteolytic activity. In Trypanosoma brucei brucei, this protein is Proteasome subunit beta type-2 (PSB4).